The primary structure comprises 292 residues: ATP synthase gamma chain (292 aa).

This sequence belongs to the ATPase gamma chain family. F-type ATPases have 2 components, CF(1) - the catalytic core - and CF(0) - the membrane proton channel. CF(1) has five subunits: alpha(3), beta(3), gamma(1), delta(1), epsilon(1). CF(0) has three main subunits: a, b and c.

The protein resides in the cell inner membrane. Its function is as follows. Produces ATP from ADP in the presence of a proton gradient across the membrane. The gamma chain is believed to be important in regulating ATPase activity and the flow of protons through the CF(0) complex. The sequence is that of ATP synthase gamma chain from Nitrobacter hamburgensis (strain DSM 10229 / NCIMB 13809 / X14).